A 210-amino-acid polypeptide reads, in one-letter code: Thiamine-phosphate synthase (210 aa).

4-amino-2-methyl-5-(diphosphooxymethyl)pyrimidine-binding positions include 36-40 (QLRIK) and N68. D69 and D88 together coordinate Mg(2+). S107 is a binding site for 4-amino-2-methyl-5-(diphosphooxymethyl)pyrimidine. 133–135 (TQT) is a 2-[(2R,5Z)-2-carboxy-4-methylthiazol-5(2H)-ylidene]ethyl phosphate binding site. A 4-amino-2-methyl-5-(diphosphooxymethyl)pyrimidine-binding site is contributed by K136. 2-[(2R,5Z)-2-carboxy-4-methylthiazol-5(2H)-ylidene]ethyl phosphate is bound by residues G165 and 185–186 (VS).

This sequence belongs to the thiamine-phosphate synthase family. The cofactor is Mg(2+).

The enzyme catalyses 2-[(2R,5Z)-2-carboxy-4-methylthiazol-5(2H)-ylidene]ethyl phosphate + 4-amino-2-methyl-5-(diphosphooxymethyl)pyrimidine + 2 H(+) = thiamine phosphate + CO2 + diphosphate. It catalyses the reaction 2-(2-carboxy-4-methylthiazol-5-yl)ethyl phosphate + 4-amino-2-methyl-5-(diphosphooxymethyl)pyrimidine + 2 H(+) = thiamine phosphate + CO2 + diphosphate. The catalysed reaction is 4-methyl-5-(2-phosphooxyethyl)-thiazole + 4-amino-2-methyl-5-(diphosphooxymethyl)pyrimidine + H(+) = thiamine phosphate + diphosphate. Its pathway is cofactor biosynthesis; thiamine diphosphate biosynthesis; thiamine phosphate from 4-amino-2-methyl-5-diphosphomethylpyrimidine and 4-methyl-5-(2-phosphoethyl)-thiazole: step 1/1. Condenses 4-methyl-5-(beta-hydroxyethyl)thiazole monophosphate (THZ-P) and 2-methyl-4-amino-5-hydroxymethyl pyrimidine pyrophosphate (HMP-PP) to form thiamine monophosphate (TMP). This Cronobacter sakazakii (strain ATCC BAA-894) (Enterobacter sakazakii) protein is Thiamine-phosphate synthase.